A 68-amino-acid polypeptide reads, in one-letter code: Neuronal regeneration-related protein (68 aa).

The segment at 21–54 is disordered; the sequence is MEGRLPKGRLPVPKEVNRKKNDETNAASLTPLGS. Residues 44–54 are compositionally biased toward polar residues; sequence TNAASLTPLGS.

As to quaternary structure, interacts with the latency-associated peptides (LAP) of TGFB1 and TGFB2; the interaction results in a decrease in TGFB autoinduction. Interacts with FLNA. Phosphorylated on Ser-59. Phosphorylation decreases stability and activity.

The protein localises to the cytoplasm. May have roles in neural function and cellular differentiation. Ectopic expression promotes axonal regeneration, induces differentiation of fibroblast into myofibroblast, induces myofibroblast ameboid migration, augments motility of gliomas, and increases retinoic-acid regulation of lipid-droplet biogenesis. Down-regulates the expression of TGFB1 and TGFB2 but not of TGFB3. May play a role in the regulation of alveolar generation. This Pongo abelii (Sumatran orangutan) protein is Neuronal regeneration-related protein (NREP).